Consider the following 815-residue polypeptide: Leucine--tRNA ligase (815 aa).

The short motif at 40–50 (PYPSGRIHMGH) is the 'HIGH' region element. Positions 583 to 587 (KMSKS) match the 'KMSKS' region motif. Lys586 serves as a coordination point for ATP.

It belongs to the class-I aminoacyl-tRNA synthetase family.

Its subcellular location is the cytoplasm. It carries out the reaction tRNA(Leu) + L-leucine + ATP = L-leucyl-tRNA(Leu) + AMP + diphosphate. The protein is Leucine--tRNA ligase of Nitratiruptor sp. (strain SB155-2).